The sequence spans 1534 residues: Dicer-like protein 2 (1534 aa).

The segment covering Met1–Pro10 has biased composition (basic and acidic residues). The segment at Met1–Glu36 is disordered. Over residues Val11–Asn27 the composition is skewed to acidic residues. Positions Thr65–Ala249 constitute a Helicase ATP-binding domain. Met78–Gln85 serves as a coordination point for ATP. Residues Asp192–His195 carry the DEAH box motif. Positions Lys404–Pro575 constitute a Helicase C-terminal domain. Residues Ala597–Ala700 enclose the Dicer dsRNA-binding fold domain. RNase III domains are found at residues Met959 to Gly1107 and Leu1153 to Gly1353. Residues Glu1193, Asp1339, and Glu1342 each contribute to the Mg(2+) site. The DRBM domain occupies His1383–Ala1483. Over residues Lys1492–Glu1504 the composition is skewed to basic and acidic residues. Residues Lys1492 to Asn1534 are disordered. Residues Asn1505–Ser1515 are compositionally biased toward polar residues. Residues Gly1516 to Asp1528 are compositionally biased toward basic and acidic residues.

This sequence belongs to the helicase family. Dicer subfamily. Requires Mg(2+) as cofactor. Mn(2+) is required as a cofactor.

In terms of biological role, dicer-like endonuclease involved in cleaving double-stranded RNA in the RNA interference (RNAi) pathway. Produces 21 to 25 bp dsRNAs (siRNAs) which target the selective destruction of homologous RNAs leading to sequence-specific suppression of gene expression, called post-transcriptional gene silencing (PTGS). Part of a broad host defense response against viral infection and transposons. Controls the expression of the non-LTR retrotransposon Tad in the African strain, Adiomopoume. This chain is Dicer-like protein 2 (dcl-2), found in Neurospora crassa (strain ATCC 24698 / 74-OR23-1A / CBS 708.71 / DSM 1257 / FGSC 987).